The chain runs to 88 residues: UPF0297 protein Cphy_2298 (88 aa).

Belongs to the UPF0297 family.

This chain is UPF0297 protein Cphy_2298, found in Lachnoclostridium phytofermentans (strain ATCC 700394 / DSM 18823 / ISDg) (Clostridium phytofermentans).